The primary structure comprises 495 residues: MRINPTTSDSTVSTLEEKNLGRIAQIIGPVLDVVFPPGKMPNIYNALVVKGRDTVGQQINVTCEVQQLLGNNRVRAVAMSATDGLTRGMEVIDTGAALSVPVGGATLGRIFNVLGEPVDNLGPVDTRTTSPIHRSAPAFIQLDTKLSIFETGIKVVDLLAPYRRGGKIGLFGGAGVGKTVLIMELINNIAKAHGGVSVFGGVGERTREGNDLYMEMKESGVINEKNIAESKVALVYGQMNEPPGARMRVGLTALTMAEYFRDVNEQDVLLFIDNIFRFVQAGSEVSALLGRMPSAVGYQPTLSTEMGSLQERITSTKEGSITSIQAVYVPADDLTDPAPATTFAHLDATTVLSRGLAAKGIYPAVDPLDSTSTMLQPRIVGEEHYETAQRVKQTLQRYKELQDIIAILGLDELSEEDRLTVARARKIERFLSQPFFVAEVFTGSPGKYVGLAETIRGFQLILSGELDGLPEQAFYLVGNIDEATAKAMNLEGEKK.

ATP is bound at residue 172–179 (GGAGVGKT).

Belongs to the ATPase alpha/beta chains family. As to quaternary structure, F-type ATPases have 2 components, CF(1) - the catalytic core - and CF(0) - the membrane proton channel. CF(1) has five subunits: alpha(3), beta(3), gamma(1), delta(1), epsilon(1). CF(0) has four main subunits: a(1), b(1), b'(1) and c(9-12).

Its subcellular location is the plastid. The protein localises to the chloroplast thylakoid membrane. It carries out the reaction ATP + H2O + 4 H(+)(in) = ADP + phosphate + 5 H(+)(out). In terms of biological role, produces ATP from ADP in the presence of a proton gradient across the membrane. The catalytic sites are hosted primarily by the beta subunits. This Scilla messeniaca (Greek squill) protein is ATP synthase subunit beta, chloroplastic.